Here is a 233-residue protein sequence, read N- to C-terminus: MTDMERRGRATEAFFGRRKGKALREQQAETLNSLLPAFLIDLSAAPPEPLTSLFPVPVERLRLEIGFGGGEHLIHRALETPSTGFIGVEPFVNSMQKLLSRIGETGASNIRVYNDDATQLLDWLPDGALDQIDLLYPDPWPKRKHWKRRFVSKTNLDRFHRVLKPGGLFCFASDIDTYVNWTLIKCRDHGGFEWIADNAADWLTPYEGWPSTRYEAKARREGRSSAYLTFRKV.

S-adenosyl-L-methionine-binding residues include Glu64, Glu89, Asp116, and Asp138. Asp138 is an active-site residue. Substrate-binding positions include Lys142, Asp174, and 212–215; that span reads TRYE.

Belongs to the class I-like SAM-binding methyltransferase superfamily. TrmB family.

It carries out the reaction guanosine(46) in tRNA + S-adenosyl-L-methionine = N(7)-methylguanosine(46) in tRNA + S-adenosyl-L-homocysteine. The protein operates within tRNA modification; N(7)-methylguanine-tRNA biosynthesis. Functionally, catalyzes the formation of N(7)-methylguanine at position 46 (m7G46) in tRNA. The polypeptide is tRNA (guanine-N(7)-)-methyltransferase (Rhizobium johnstonii (strain DSM 114642 / LMG 32736 / 3841) (Rhizobium leguminosarum bv. viciae)).